The chain runs to 204 residues: Large ribosomal subunit protein bL25 (204 aa).

The tract at residues 1–23 is disordered; it reads MSETLHLSAETRDRAGKGASRAL.

It belongs to the bacterial ribosomal protein bL25 family. CTC subfamily. Part of the 50S ribosomal subunit; part of the 5S rRNA/L5/L18/L25 subcomplex. Contacts the 5S rRNA. Binds to the 5S rRNA independently of L5 and L18.

Functionally, this is one of the proteins that binds to the 5S RNA in the ribosome where it forms part of the central protuberance. The chain is Large ribosomal subunit protein bL25 from Novosphingobium aromaticivorans (strain ATCC 700278 / DSM 12444 / CCUG 56034 / CIP 105152 / NBRC 16084 / F199).